A 400-amino-acid polypeptide reads, in one-letter code: MKNYHAPDEKGFFGEHGGLYVSETLIPALQELADAYKAAKNDPEFWAEFRCDLKHYVGRPSPVYHAARLSEHLGGAQIWLKREDLNHTGAHKVNNTIGQALLAKRMGKKRVIAETGAGQHGVASATVAARFGMTCDVYMGADDIQRQMPNVFRMKLLGANVVGVESGSRTLKDAMNEAMREWVARVDDTFYIIGTAAGPAPYPEMVRDFQCVIGNEAKAQMQEAIGRQPDVAVACVGGGSNAIGLFHPYIGEENVRLVGVEAGGLGVNTPDHAAPITSGAPIGVLHGFRSYLMQDENGQVLGTHSVSAGLDYPGIGPEHSHLHDIKRVEYTVAKDDEALEAFDLLCRFEGIIPALESSHAVAWAVKNAPKMGKDQVILVNLSGRGDKDINTVAKLKGIKL.

Lys-92 carries the N6-(pyridoxal phosphate)lysine modification.

This sequence belongs to the TrpB family. Tetramer of two alpha and two beta chains. It depends on pyridoxal 5'-phosphate as a cofactor.

It carries out the reaction (1S,2R)-1-C-(indol-3-yl)glycerol 3-phosphate + L-serine = D-glyceraldehyde 3-phosphate + L-tryptophan + H2O. The protein operates within amino-acid biosynthesis; L-tryptophan biosynthesis; L-tryptophan from chorismate: step 5/5. Its function is as follows. The beta subunit is responsible for the synthesis of L-tryptophan from indole and L-serine. The sequence is that of Tryptophan synthase beta chain from Neisseria meningitidis serogroup C (strain 053442).